Consider the following 348-residue polypeptide: D-erythrose-4-phosphate dehydrogenase (348 aa).

NAD(+) contacts are provided by residues 12-13 (RI) and Arg81. Substrate-binding positions include 154–156 (SCT), Arg200, 213–214 (TK), and Arg236. Cys155 acts as the Nucleophile in catalysis. Residue Asn318 participates in NAD(+) binding.

It belongs to the glyceraldehyde-3-phosphate dehydrogenase family. Epd subfamily. In terms of assembly, homotetramer.

Its subcellular location is the cytoplasm. It catalyses the reaction D-erythrose 4-phosphate + NAD(+) + H2O = 4-phospho-D-erythronate + NADH + 2 H(+). It functions in the pathway cofactor biosynthesis; pyridoxine 5'-phosphate biosynthesis; pyridoxine 5'-phosphate from D-erythrose 4-phosphate: step 1/5. Functionally, catalyzes the NAD-dependent conversion of D-erythrose 4-phosphate to 4-phosphoerythronate. The polypeptide is D-erythrose-4-phosphate dehydrogenase (Salmonella paratyphi A (strain ATCC 9150 / SARB42)).